A 432-amino-acid chain; its full sequence is Glutamyl-tRNA reductase (432 aa).

Residues 49 to 52 (TCNR), S109, 114 to 116 (EGQ), and Q120 each bind substrate. C50 functions as the Nucleophile in the catalytic mechanism. NADP(+) is bound at residue 198 to 203 (GAGRMS).

The protein belongs to the glutamyl-tRNA reductase family. As to quaternary structure, homodimer.

The catalysed reaction is (S)-4-amino-5-oxopentanoate + tRNA(Glu) + NADP(+) = L-glutamyl-tRNA(Glu) + NADPH + H(+). Its pathway is porphyrin-containing compound metabolism; protoporphyrin-IX biosynthesis; 5-aminolevulinate from L-glutamyl-tRNA(Glu): step 1/2. The protein operates within porphyrin-containing compound metabolism; chlorophyll biosynthesis. Catalyzes the NADPH-dependent reduction of glutamyl-tRNA(Glu) to glutamate 1-semialdehyde (GSA). The chain is Glutamyl-tRNA reductase from Synechococcus sp. (strain CC9902).